The chain runs to 294 residues: 1D-myo-inositol 2-acetamido-2-deoxy-alpha-D-glucopyranoside deacetylase (294 aa).

Positions 15, 18, and 150 each coordinate Zn(2+).

This sequence belongs to the MshB deacetylase family. It depends on Zn(2+) as a cofactor.

The catalysed reaction is 1D-myo-inositol 2-acetamido-2-deoxy-alpha-D-glucopyranoside + H2O = 1D-myo-inositol 2-amino-2-deoxy-alpha-D-glucopyranoside + acetate. Its function is as follows. Catalyzes the deacetylation of 1D-myo-inositol 2-acetamido-2-deoxy-alpha-D-glucopyranoside (GlcNAc-Ins) in the mycothiol biosynthesis pathway. The chain is 1D-myo-inositol 2-acetamido-2-deoxy-alpha-D-glucopyranoside deacetylase from Streptomyces avermitilis (strain ATCC 31267 / DSM 46492 / JCM 5070 / NBRC 14893 / NCIMB 12804 / NRRL 8165 / MA-4680).